Reading from the N-terminus, the 226-residue chain is Cytidylate kinase (226 aa).

10-18 (GPASSGKST) serves as a coordination point for ATP.

The protein belongs to the cytidylate kinase family. Type 1 subfamily.

Its subcellular location is the cytoplasm. It catalyses the reaction CMP + ATP = CDP + ADP. It carries out the reaction dCMP + ATP = dCDP + ADP. This Streptococcus equi subsp. equi (strain 4047) protein is Cytidylate kinase.